The primary structure comprises 776 residues: Lon protease (776 aa).

One can recognise a Lon N-terminal domain in the interval 12 to 209 (LPIIALRGLW…LVYKFVIKEI (198 aa)). Position 360–367 (360–367 (GPPGVGKT)) interacts with ATP. The region spanning 596–776 (EDTVGVVNGL…VKEILDEVLI (181 aa)) is the Lon proteolytic domain. Catalysis depends on residues S683 and K726.

The protein belongs to the peptidase S16 family. Homohexamer. Organized in a ring with a central cavity.

It localises to the cytoplasm. It catalyses the reaction Hydrolysis of proteins in presence of ATP.. In terms of biological role, ATP-dependent serine protease that mediates the selective degradation of mutant and abnormal proteins as well as certain short-lived regulatory proteins. Required for cellular homeostasis and for survival from DNA damage and developmental changes induced by stress. Degrades polypeptides processively to yield small peptide fragments that are 5 to 10 amino acids long. Binds to DNA in a double-stranded, site-specific manner. The chain is Lon protease from Finegoldia magna (strain ATCC 29328 / DSM 20472 / WAL 2508) (Peptostreptococcus magnus).